The sequence spans 244 residues: Serine-rich single-pass membrane protein 1 (244 aa).

The helical transmembrane segment at 35–55 (CGTIGNFLLWYFVIVFVLMFF) threads the bilayer. Disordered regions lie at residues 65–112 (DKKD…LTPV), 132–191 (QSQF…LGSY), and 213–244 (HSQQ…FSKF). Over residues 80-94 (ASKETSYKWQSKDGA) the composition is skewed to basic and acidic residues. Composition is skewed to polar residues over residues 97-112 (PSQT…LTPV) and 132-142 (QSQFNEVNQNQ). Residues 161–176 (SWKESESEHHPSPDSI) are compositionally biased toward basic and acidic residues. A compositionally biased stretch (polar residues) spans 231–244 (ESSISDINTKFSKF).

It localises to the membrane. In Macaca fascicularis (Crab-eating macaque), this protein is Serine-rich single-pass membrane protein 1 (SSMEM1).